Reading from the N-terminus, the 182-residue chain is Riboflavin kinase (182 aa).

2 residues coordinate Mg(2+): Thr39 and Asn41. The active-site Nucleophile is Glu117.

This sequence belongs to the flavokinase family. Zn(2+) is required as a cofactor. Requires Mg(2+) as cofactor.

The catalysed reaction is riboflavin + ATP = FMN + ADP + H(+). It functions in the pathway cofactor biosynthesis; FMN biosynthesis; FMN from riboflavin (ATP route): step 1/1. In terms of biological role, catalyzes the phosphorylation of riboflavin (vitamin B2) to form flavin mononucleotide (FMN) coenzyme. This chain is Riboflavin kinase (FMN1), found in Lodderomyces elongisporus (strain ATCC 11503 / CBS 2605 / JCM 1781 / NBRC 1676 / NRRL YB-4239) (Yeast).